The chain runs to 488 residues: Glutamyl-tRNA(Gln) amidotransferase subunit A (488 aa).

Catalysis depends on charge relay system residues K76 and S152. S176 functions as the Acyl-ester intermediate in the catalytic mechanism.

This sequence belongs to the amidase family. GatA subfamily. Heterotrimer of A, B and C subunits.

It catalyses the reaction L-glutamyl-tRNA(Gln) + L-glutamine + ATP + H2O = L-glutaminyl-tRNA(Gln) + L-glutamate + ADP + phosphate + H(+). Its function is as follows. Allows the formation of correctly charged Gln-tRNA(Gln) through the transamidation of misacylated Glu-tRNA(Gln) in organisms which lack glutaminyl-tRNA synthetase. The reaction takes place in the presence of glutamine and ATP through an activated gamma-phospho-Glu-tRNA(Gln). The sequence is that of Glutamyl-tRNA(Gln) amidotransferase subunit A from Oceanobacillus iheyensis (strain DSM 14371 / CIP 107618 / JCM 11309 / KCTC 3954 / HTE831).